A 303-amino-acid chain; its full sequence is 4-hydroxy-tetrahydrodipicolinate synthase (303 aa).

Thr-57 is a binding site for pyruvate. The Proton donor/acceptor role is filled by Tyr-143. Catalysis depends on Lys-171, which acts as the Schiff-base intermediate with substrate. Ile-211 provides a ligand contact to pyruvate.

It belongs to the DapA family. As to quaternary structure, homotetramer; dimer of dimers.

It localises to the cytoplasm. The enzyme catalyses L-aspartate 4-semialdehyde + pyruvate = (2S,4S)-4-hydroxy-2,3,4,5-tetrahydrodipicolinate + H2O + H(+). Its pathway is amino-acid biosynthesis; L-lysine biosynthesis via DAP pathway; (S)-tetrahydrodipicolinate from L-aspartate: step 3/4. Functionally, catalyzes the condensation of (S)-aspartate-beta-semialdehyde [(S)-ASA] and pyruvate to 4-hydroxy-tetrahydrodipicolinate (HTPA). This is 4-hydroxy-tetrahydrodipicolinate synthase from Bifidobacterium animalis subsp. lactis (strain AD011).